Reading from the N-terminus, the 278-residue chain is Undecaprenyl-diphosphatase 1 (278 aa).

The next 5 helical transmembrane spans lie at 85–105 (LNVI…EKTI), 108–128 (ALFS…VILW), 188–208 (VATE…TAYE), 218–238 (VDAL…AFAC), and 254–274 (FAWY…SGAL).

Belongs to the UppP family.

The protein localises to the cell inner membrane. The catalysed reaction is di-trans,octa-cis-undecaprenyl diphosphate + H2O = di-trans,octa-cis-undecaprenyl phosphate + phosphate + H(+). In terms of biological role, catalyzes the dephosphorylation of undecaprenyl diphosphate (UPP). Confers resistance to bacitracin. In Paraburkholderia xenovorans (strain LB400), this protein is Undecaprenyl-diphosphatase 1.